A 540-amino-acid chain; its full sequence is MTLNSLPAWTALQSHFEQIRHARLRDWFAPENDRAPTRAERFTIPGGGLAADLSKNRINDDTLRLLVQLAREAGVEARRDAMFAGEIVNPTEGRAALHTALRATDPHAPFHAQISAERAKMATFARAVRSGAWTGYTGKRIRHVINIGIGGSDLGPKMVTHALHHVASPDISTHFVSNVDGADLARVLEQVDPEETLAIIVSKTFTTLETMTNARSLRDWFVARGCPEAALAKHFVGVSANPAEVVKFGIDADNVFEMWDWVGGRYSLWSAVGLSIMIAIGPEQFDELLAGANDMDRHFRQAPLERNLPVLLGLIGIWYRNFFGSQSYLVAPYSEALHYLPSYLQQLEMESNGKSARLDGTFVDYPTSAVTWGEPGTNGQHAFFQMLHQGPTIVPIDFIAVLTPEHPLASHHPKLLANCFAQSEALMLGRTLDEARKVAGPGKEALAPHLTFPGNRPTTTLLVDALTPRTLGALIALYEHKVLVQATVWDINPFDQWGVELGKILGKVVEADLSAESVDPAKHDSSTTALIERARAALKR.

Residue Glu350 is the Proton donor of the active site. Residues His381 and Lys503 contribute to the active site.

This sequence belongs to the GPI family.

It is found in the cytoplasm. The enzyme catalyses alpha-D-glucose 6-phosphate = beta-D-fructose 6-phosphate. It participates in carbohydrate biosynthesis; gluconeogenesis. Its pathway is carbohydrate degradation; glycolysis; D-glyceraldehyde 3-phosphate and glycerone phosphate from D-glucose: step 2/4. In terms of biological role, catalyzes the reversible isomerization of glucose-6-phosphate to fructose-6-phosphate. The sequence is that of Glucose-6-phosphate isomerase from Burkholderia ambifaria (strain MC40-6).